A 500-amino-acid polypeptide reads, in one-letter code: Proline/betaine transporter (500 aa).

Residues 1-37 (MLKRKKVKPITLRDVTIIDDGKLRKAITAASLGNAME) are Cytoplasmic-facing. The chain crosses the membrane as a helical span at residues 38–58 (WFDFGVYGFVAYALGKVFFPG). Residues 59-65 (ADPSVQM) are Periplasmic-facing. The chain crosses the membrane as a helical span at residues 66–86 (VAALATFSVPFLIRPLGGLFF). Residues 87–97 (GMLGDKYGRQK) lie on the Cytoplasmic side of the membrane. Residues 98–118 (ILAITIVIMSISTFCIGLIPS) form a helical membrane-spanning segment. The Periplasmic segment spans residues 119 to 121 (YDT). Residues 122 to 142 (IGIWAPILLLICKMAQGFSVG) traverse the membrane as a helical segment. Topologically, residues 143–169 (GEYTGASIFVAEYSPDRKRGFMGSWLD) are cytoplasmic. A helical membrane pass occupies residues 170 to 190 (FGSIAGFVLGAGVVVLISTIV). Over 191-194 (GEAN) the chain is Periplasmic. The helical transmembrane segment at 195–215 (FLDWGWRIPFFIALPLGIIGL) threads the bilayer. Residues 216 to 260 (YLRHALEETPAFQQHVDKLEQGDREGLQDGPKVSFKEIATKYWRS) lie on the Cytoplasmic side of the membrane. Residues 261 to 281 (LLTCIGLVIATNVTYYMLLTY) form a helical membrane-spanning segment. Topologically, residues 282–297 (MPSYLSHNLHYSEDHG) are periplasmic. A helical membrane pass occupies residues 298–318 (VLIIIAIMIGMLFVQPVMGLL). The Cytoplasmic portion of the chain corresponds to 319–325 (SDRFGRR). A helical membrane pass occupies residues 326-346 (PFVLLGSVALFVLAIPAFILI). The Periplasmic segment spans residues 347–350 (NSNV). A helical transmembrane segment spans residues 351-371 (IGLIFAGLLMLAVILNCFTGV). The Cytoplasmic segment spans residues 372-390 (MASTLPAMFPTHIRYSALA). The chain crosses the membrane as a helical span at residues 391-411 (AAFNISVLVAGLTPTLAAWLV). Residues 412–416 (ESSQN) are Periplasmic-facing. The chain crosses the membrane as a helical span at residues 417–437 (LMMPAYYLMVVAVVGLITGVT). Topologically, residues 438-500 (MKETANRPLK…LVQQHPRIDE (63 aa)) are cytoplasmic. A coiled-coil region spans residues 453-498 (ASDIQEAKEILVEHYDNIEQKIDDIDHEIADLQAKRTRLVQQHPRI).

The protein belongs to the major facilitator superfamily. Metabolite:H+ Symporter (MHS) family (TC 2.A.1.6) family.

Its subcellular location is the cell inner membrane. In terms of biological role, proton symporter that senses osmotic shifts and responds by importing osmolytes such as proline, glycine betaine, stachydrine, pipecolic acid, ectoine and taurine. It is both an osmosensor and an osmoregulator which is available to participate early in the bacterial osmoregulatory response. The chain is Proline/betaine transporter (proP) from Escherichia coli O157:H7.